The sequence spans 389 residues: Smad nuclear interacting protein 1 (389 aa).

A compositionally biased stretch (basic and acidic residues) spans methionine 1–arginine 10. The tract at residues methionine 1–lysine 212 is disordered. Serine 18 is modified (phosphoserine). A Glycyl lysine isopeptide (Lys-Gly) (interchain with G-Cter in SUMO); alternate cross-link involves residue lysine 28. A Glycyl lysine isopeptide (Lys-Gly) (interchain with G-Cter in SUMO1); alternate cross-link involves residue lysine 28. A Glycyl lysine isopeptide (Lys-Gly) (interchain with G-Cter in SUMO2); alternate cross-link involves residue lysine 28. Over residues lysine 28–aspartate 43 the composition is skewed to basic and acidic residues. A phosphoserine mark is found at serine 33 and serine 48. Over residues alanine 54–serine 72 the composition is skewed to low complexity. Residues proline 73–serine 95 are compositionally biased toward basic residues. Serine 95 bears the Phosphoserine mark. Basic and acidic residues-rich tracts occupy residues valine 103 to arginine 138 and arginine 147 to serine 163. A Glycyl lysine isopeptide (Lys-Gly) (interchain with G-Cter in SUMO2) cross-link involves residue lysine 104. A Phosphoserine modification is found at serine 149. Positions leucine 166–valine 197 form a coiled coil. Lysine 214 participates in a covalent cross-link: Glycyl lysine isopeptide (Lys-Gly) (interchain with G-Cter in SUMO2). One can recognise an FHA domain in the interval tyrosine 272–isoleucine 335. The span at glutamate 363 to lysine 373 shows a compositional bias: basic and acidic residues. Residues glutamate 363–serine 389 are disordered. Residues glutamate 374–serine 389 are compositionally biased toward acidic residues. Serine 386 is subject to Phosphoserine.

Component of activated spliceosome complexes. Component of the minor spliceosome, which splices U12-type introns. Binds SMAD4 and CREBBP/EP300. Binds the SMAD1/OAZ1/PSMB4 complex. Interacts with DROSHA and SMARCA4. Component of the SNARP complex which consists at least of SNIP1, SNW1, THRAP3, BCLAF1 and PNN. Post-translationally, degraded by the proteasome upon binding to the SMAD1/OAZ1/PSMB4 complex.

Its subcellular location is the nucleus. Functionally, required for pre-mRNA splicing as component of the spliceosome. As a component of the minor spliceosome, involved in the splicing of U12-type introns in pre-mRNAs. Down-regulates NF-kappa-B signaling by competing with RELA for CREBBP/EP300 binding. Involved in the microRNA (miRNA) biogenesis. May be involved in cyclin-D1/CCND1 mRNA stability through the SNARP complex which associates with both the 3'end of the CCND1 gene and its mRNA. This chain is Smad nuclear interacting protein 1 (Snip1), found in Rattus norvegicus (Rat).